Consider the following 265-residue polypeptide: Phosphate import ATP-binding protein PstB 1 (265 aa).

The ABC transporter domain occupies Leu-20 to Ile-260. Gly-53 to Ser-60 contacts ATP.

The protein belongs to the ABC transporter superfamily. Phosphate importer (TC 3.A.1.7) family. The complex is composed of two ATP-binding proteins (PstB), two transmembrane proteins (PstC and PstA) and a solute-binding protein (PstS).

It is found in the cell membrane. It carries out the reaction phosphate(out) + ATP + H2O = ADP + 2 phosphate(in) + H(+). Its function is as follows. Part of the ABC transporter complex PstSACB involved in phosphate import. Responsible for energy coupling to the transport system. This Lactobacillus acidophilus (strain ATCC 700396 / NCK56 / N2 / NCFM) protein is Phosphate import ATP-binding protein PstB 1.